The sequence spans 466 residues: tRNA-2-methylthio-N(6)-dimethylallyladenosine synthase (466 aa).

Residues 21–137 (GSYWITTFGC…LEDLLNQVDN (117 aa)) enclose the MTTase N-terminal domain. Positions 30, 66, 100, 172, 176, and 179 each coordinate [4Fe-4S] cluster. Positions 158–395 (RDSNICAWVN…NLLVEQTAKD (238 aa)) constitute a Radical SAM core domain. In terms of domain architecture, TRAM spans 398–466 (TRYHNQIVEV…AFSLTGSPIQ (69 aa)).

Belongs to the methylthiotransferase family. MiaB subfamily. In terms of assembly, monomer. [4Fe-4S] cluster serves as cofactor.

It localises to the cytoplasm. The enzyme catalyses N(6)-dimethylallyladenosine(37) in tRNA + (sulfur carrier)-SH + AH2 + 2 S-adenosyl-L-methionine = 2-methylsulfanyl-N(6)-dimethylallyladenosine(37) in tRNA + (sulfur carrier)-H + 5'-deoxyadenosine + L-methionine + A + S-adenosyl-L-homocysteine + 2 H(+). Catalyzes the methylthiolation of N6-(dimethylallyl)adenosine (i(6)A), leading to the formation of 2-methylthio-N6-(dimethylallyl)adenosine (ms(2)i(6)A) at position 37 in tRNAs that read codons beginning with uridine. In Prochlorococcus marinus (strain SARG / CCMP1375 / SS120), this protein is tRNA-2-methylthio-N(6)-dimethylallyladenosine synthase.